A 360-amino-acid chain; its full sequence is Phospho-N-acetylmuramoyl-pentapeptide-transferase (360 aa).

10 helical membrane passes run 21–41 (YITF…LWIG), 73–93 (TMGG…WADL), 98–118 (VWFV…DDYW), 132–152 (WKYF…YAVG), 168–188 (FMPQ…VGTS), 199–219 (GLAI…AWAT), 236–256 (AGEL…FLWY), 263–283 (VFMG…IAVL), 288–308 (LLLV…ILQV), and 338–358 (VIVC…VTLK).

It belongs to the glycosyltransferase 4 family. MraY subfamily. Mg(2+) serves as cofactor.

Its subcellular location is the cell inner membrane. It catalyses the reaction UDP-N-acetyl-alpha-D-muramoyl-L-alanyl-gamma-D-glutamyl-meso-2,6-diaminopimeloyl-D-alanyl-D-alanine + di-trans,octa-cis-undecaprenyl phosphate = di-trans,octa-cis-undecaprenyl diphospho-N-acetyl-alpha-D-muramoyl-L-alanyl-D-glutamyl-meso-2,6-diaminopimeloyl-D-alanyl-D-alanine + UMP. Its pathway is cell wall biogenesis; peptidoglycan biosynthesis. Catalyzes the initial step of the lipid cycle reactions in the biosynthesis of the cell wall peptidoglycan: transfers peptidoglycan precursor phospho-MurNAc-pentapeptide from UDP-MurNAc-pentapeptide onto the lipid carrier undecaprenyl phosphate, yielding undecaprenyl-pyrophosphoryl-MurNAc-pentapeptide, known as lipid I. The chain is Phospho-N-acetylmuramoyl-pentapeptide-transferase from Actinobacillus pleuropneumoniae serotype 7 (strain AP76).